We begin with the raw amino-acid sequence, 285 residues long: N(G),N(G)-dimethylarginine dimethylaminohydrolase 1 (285 aa).

A2 is modified (N-acetylalanine). The substrate site is built by L30, D73, E78, D79, R98, and R145. H173 serves as the catalytic Proton donor. The residue at position 222 (C222) is an S-nitrosocysteine. Residue V268 participates in substrate binding. C274 carries the S-nitrosocysteine modification. Residue C274 is the Nucleophile of the active site. C274 contributes to the Zn(2+) binding site.

Monomer. As to expression, widely distributed, highest concentrations found in brain, brain cortex and kidney (at protein level).

It catalyses the reaction N(omega),N(omega)-dimethyl-L-arginine + H2O = dimethylamine + L-citrulline. The catalysed reaction is N(omega)-methyl-L-arginine + H2O = L-citrulline + methylamine. Copurifies with a tightly bound zinc ion. Activated by release of zinc. His and other agents that promote the release of bound zinc ions activate the enzyme (in vitro). Inhibited by S-nitrosylation. Zinc protects the protein against S-nitrosylation. Hydrolyzes N(G),N(G)-dimethyl-L-arginine (ADMA) and N(G)-monomethyl-L-arginine (MMA) which act as inhibitors of NOS. Has therefore a role in the regulation of nitric oxide generation. The chain is N(G),N(G)-dimethylarginine dimethylaminohydrolase 1 (DDAH1) from Bos taurus (Bovine).